The following is a 172-amino-acid chain: Adenine phosphoribosyltransferase (172 aa).

This sequence belongs to the purine/pyrimidine phosphoribosyltransferase family. As to quaternary structure, homodimer.

The protein resides in the cytoplasm. The enzyme catalyses AMP + diphosphate = 5-phospho-alpha-D-ribose 1-diphosphate + adenine. It participates in purine metabolism; AMP biosynthesis via salvage pathway; AMP from adenine: step 1/1. Catalyzes a salvage reaction resulting in the formation of AMP, that is energically less costly than de novo synthesis. The polypeptide is Adenine phosphoribosyltransferase (Clostridium beijerinckii (strain ATCC 51743 / NCIMB 8052) (Clostridium acetobutylicum)).